A 50-amino-acid chain; its full sequence is Cytochrome c-555 (50 aa).

Positions 7, 10, 11, and 25 each coordinate heme.

Post-translationally, binds 1 heme group per subunit.

It localises to the cell membrane. The protein is Cytochrome c-555 of Schinkia azotoformans (Bacillus azotoformans).